The primary structure comprises 459 residues: Argininosuccinate lyase (459 aa).

This sequence belongs to the lyase 1 family. Argininosuccinate lyase subfamily.

It localises to the cytoplasm. It catalyses the reaction 2-(N(omega)-L-arginino)succinate = fumarate + L-arginine. The protein operates within amino-acid biosynthesis; L-arginine biosynthesis; L-arginine from L-ornithine and carbamoyl phosphate: step 3/3. The polypeptide is Argininosuccinate lyase (Staphylococcus aureus (strain MSSA476)).